Here is a 132-residue protein sequence, read N- to C-terminus: Small ribosomal subunit protein uS8 (132 aa).

The protein belongs to the universal ribosomal protein uS8 family. Part of the 30S ribosomal subunit. Contacts proteins S5 and S12.

In terms of biological role, one of the primary rRNA binding proteins, it binds directly to 16S rRNA central domain where it helps coordinate assembly of the platform of the 30S subunit. This chain is Small ribosomal subunit protein uS8, found in Halalkalibacterium halodurans (strain ATCC BAA-125 / DSM 18197 / FERM 7344 / JCM 9153 / C-125) (Bacillus halodurans).